The sequence spans 473 residues: DNA (cytosine-5)-methyltransferase DRM1A (473 aa).

One can recognise a UBA 1 domain in the interval serine 20–tyrosine 61. The span at glutamate 84–aspartate 101 shows a compositional bias: acidic residues. The disordered stretch occupies residues glutamate 84–glutamate 115. Residues glutamate 120–glutamate 140 enclose the UBA 2 domain. The region spanning valine 204–isoleucine 431 is the SAM-dependent MTase DRM-type domain.

The protein belongs to the class I-like SAM-binding methyltransferase superfamily. DRM-methyltransferase family.

It is found in the nucleus. It catalyses the reaction a 2'-deoxycytidine in DNA + S-adenosyl-L-methionine = a 5-methyl-2'-deoxycytidine in DNA + S-adenosyl-L-homocysteine + H(+). Functionally, involved in de novo DNA methylation. Involved in RNA-directed DNA methylation (RdDM). The sequence is that of DNA (cytosine-5)-methyltransferase DRM1A from Oryza sativa subsp. japonica (Rice).